We begin with the raw amino-acid sequence, 292 residues long: Glycine--tRNA ligase alpha subunit (292 aa).

The protein belongs to the class-II aminoacyl-tRNA synthetase family. As to quaternary structure, tetramer of two alpha and two beta subunits.

Its subcellular location is the cytoplasm. The enzyme catalyses tRNA(Gly) + glycine + ATP = glycyl-tRNA(Gly) + AMP + diphosphate. The chain is Glycine--tRNA ligase alpha subunit from Geobacter sulfurreducens (strain ATCC 51573 / DSM 12127 / PCA).